The following is a 1303-amino-acid chain: Phosphoribosylformylglycinamidine synthase (1303 aa).

Residues 308 to 319 (GASTGSGGEIRD) and Ala679 contribute to the ATP site. Positions 719, 723, and 892 each coordinate Mg(2+). Residues 1003–1023 (LRDNPACADQEHEAKKDNSDP) form a disordered region. The segment covering 1011–1021 (DQEHEAKKDNS) has biased composition (basic and acidic residues). A Glutamine amidotransferase type-1 domain is found at 1050–1303 (MAILREQGVN…MFQNARKNIG (254 aa)). Residue Cys1143 is the Nucleophile of the active site. Active-site residues include His1268 and Glu1270.

In the N-terminal section; belongs to the FGAMS family. In terms of assembly, monomer.

It is found in the cytoplasm. It carries out the reaction N(2)-formyl-N(1)-(5-phospho-beta-D-ribosyl)glycinamide + L-glutamine + ATP + H2O = 2-formamido-N(1)-(5-O-phospho-beta-D-ribosyl)acetamidine + L-glutamate + ADP + phosphate + H(+). The protein operates within purine metabolism; IMP biosynthesis via de novo pathway; 5-amino-1-(5-phospho-D-ribosyl)imidazole from N(2)-formyl-N(1)-(5-phospho-D-ribosyl)glycinamide: step 1/2. In terms of biological role, phosphoribosylformylglycinamidine synthase involved in the purines biosynthetic pathway. Catalyzes the ATP-dependent conversion of formylglycinamide ribonucleotide (FGAR) and glutamine to yield formylglycinamidine ribonucleotide (FGAM) and glutamate. In Aliivibrio fischeri (strain ATCC 700601 / ES114) (Vibrio fischeri), this protein is Phosphoribosylformylglycinamidine synthase.